Reading from the N-terminus, the 526-residue chain is Carotenoid cleavage oxygenase 1 (526 aa).

The disordered stretch occupies residues 1-33 (MAEYVFSDAPKDSHGNGVKDAVPGKQPEELPPA). Tyr133 and Lys164 together coordinate piceatannol. 2 residues coordinate trans-resveratrol: Tyr133 and Lys164. Fe cation contacts are provided by His197, His248, and His313. Residue Glu383 coordinates piceatannol. Residue Glu383 coordinates trans-resveratrol. His510 contributes to the Fe cation binding site.

This sequence belongs to the carotenoid oxygenase family. It depends on Fe(2+) as a cofactor.

It catalyses the reaction trans-resveratrol + O2 = 3,5-dihydroxybenzaldehyde + 4-hydroxybenzaldehyde. The catalysed reaction is piceatannol + O2 = 3,5-dihydroxybenzaldehyde + 3,4-dihydroxybenzaldehyde. Functionally, dioxygenase that cleaves the interphenyl C-alpha-C-beta double bond of resveratrol to yield 3,5-dihydroxybenzaldehyde and 4-hydroxybenzaldehyde. Also cleaves piceatannol, a compound that differs from resveratrol only in the occurrence of an additional hydroxyl group, which leads to the production of 3,4-dihydroxybenzaldehyde and 3,5-hydroxybenzaldehyde. Is not able to cleave trans-stilbene, 4-monohydroxy-trans-stilbene, 3,5-dihydroxy-trans-stilbene (pinosylvin), trismethoxy-resveratrol, and 3,3',5-trihydroxy-4'-methoxystilbene-3-O-beta-D-glucoside. Is not involved in carotenoid metabolism. The sequence is that of Carotenoid cleavage oxygenase 1 from Neurospora crassa (strain ATCC 24698 / 74-OR23-1A / CBS 708.71 / DSM 1257 / FGSC 987).